The sequence spans 177 residues: Large ribosomal subunit protein uL6 (177 aa).

As to quaternary structure, part of the 50S ribosomal subunit.

Its function is as follows. This protein binds to the 23S rRNA, and is important in its secondary structure. It is located near the subunit interface in the base of the L7/L12 stalk, and near the tRNA binding site of the peptidyltransferase center. The chain is Large ribosomal subunit protein uL6 from Rhodopseudomonas palustris (strain ATCC BAA-98 / CGA009).